The sequence spans 449 residues: Glucose-6-phosphate isomerase (449 aa).

E291 acts as the Proton donor in catalysis. Active-site residues include H312 and K426.

Belongs to the GPI family.

The protein resides in the cytoplasm. The enzyme catalyses alpha-D-glucose 6-phosphate = beta-D-fructose 6-phosphate. The protein operates within carbohydrate biosynthesis; gluconeogenesis. It participates in carbohydrate degradation; glycolysis; D-glyceraldehyde 3-phosphate and glycerone phosphate from D-glucose: step 2/4. In terms of biological role, catalyzes the reversible isomerization of glucose-6-phosphate to fructose-6-phosphate. The chain is Glucose-6-phosphate isomerase from Streptococcus thermophilus (strain CNRZ 1066).